The primary structure comprises 71 residues: Small ribosomal subunit protein bS21 (71 aa).

This sequence belongs to the bacterial ribosomal protein bS21 family.

The sequence is that of Small ribosomal subunit protein bS21 from Dichelobacter nodosus (strain VCS1703A).